The following is a 205-amino-acid chain: GTP cyclohydrolase-2 (205 aa).

A GTP-binding site is contributed by 49–53; that stretch reads RLHSE. Zn(2+) is bound by residues cysteine 54, cysteine 65, and cysteine 67. GTP-binding positions include glutamine 70, 92-94, and threonine 114; that span reads EGR. Residue aspartate 126 is the Proton acceptor of the active site. The Nucleophile role is filled by arginine 128. GTP-binding residues include threonine 149 and lysine 154.

It belongs to the GTP cyclohydrolase II family. Zn(2+) is required as a cofactor.

It catalyses the reaction GTP + 4 H2O = 2,5-diamino-6-hydroxy-4-(5-phosphoribosylamino)-pyrimidine + formate + 2 phosphate + 3 H(+). It participates in cofactor biosynthesis; riboflavin biosynthesis; 5-amino-6-(D-ribitylamino)uracil from GTP: step 1/4. Its function is as follows. Catalyzes the conversion of GTP to 2,5-diamino-6-ribosylamino-4(3H)-pyrimidinone 5'-phosphate (DARP), formate and pyrophosphate. This Pseudomonas putida (strain ATCC 700007 / DSM 6899 / JCM 31910 / BCRC 17059 / LMG 24140 / F1) protein is GTP cyclohydrolase-2.